A 380-amino-acid chain; its full sequence is Glucose-1-phosphate adenylyltransferase (380 aa).

Residues glycine 164, 179-180 (EK), and serine 190 each bind alpha-D-glucose 1-phosphate.

This sequence belongs to the bacterial/plant glucose-1-phosphate adenylyltransferase family. In terms of assembly, homotetramer.

The enzyme catalyses alpha-D-glucose 1-phosphate + ATP + H(+) = ADP-alpha-D-glucose + diphosphate. Its pathway is glycan biosynthesis; glycogen biosynthesis. Involved in the biosynthesis of ADP-glucose, a building block required for the elongation reactions to produce glycogen. Catalyzes the reaction between ATP and alpha-D-glucose 1-phosphate (G1P) to produce pyrophosphate and ADP-Glc. The sequence is that of Glucose-1-phosphate adenylyltransferase from Streptococcus pneumoniae (strain Hungary19A-6).